The sequence spans 579 residues: Aspartate--tRNA(Asp/Asn) ligase (579 aa).

Glu-171 serves as a coordination point for L-aspartate. Positions 195-198 are aspartate; the sequence is QLFK. An L-aspartate-binding site is contributed by Arg-217. ATP contacts are provided by residues 217–219 and Gln-226; that span reads RDE. Position 444 (His-444) interacts with L-aspartate. Glu-475 contributes to the ATP binding site. Arg-482 lines the L-aspartate pocket. 527–530 provides a ligand contact to ATP; the sequence is GLDR.

This sequence belongs to the class-II aminoacyl-tRNA synthetase family. Type 1 subfamily. In terms of assembly, homodimer.

The protein resides in the cytoplasm. It carries out the reaction tRNA(Asx) + L-aspartate + ATP = L-aspartyl-tRNA(Asx) + AMP + diphosphate. Its function is as follows. Aspartyl-tRNA synthetase with relaxed tRNA specificity since it is able to aspartylate not only its cognate tRNA(Asp) but also tRNA(Asn). Reaction proceeds in two steps: L-aspartate is first activated by ATP to form Asp-AMP and then transferred to the acceptor end of tRNA(Asp/Asn). This Thermotoga maritima (strain ATCC 43589 / DSM 3109 / JCM 10099 / NBRC 100826 / MSB8) protein is Aspartate--tRNA(Asp/Asn) ligase.